A 419-amino-acid chain; its full sequence is eIF5-mimic protein 1 (419 aa).

The disordered stretch occupies residues 1 to 22; sequence MNKHQKPVLTGQRFKTRKRDEK. N6-acetyllysine is present on lysine 117. One can recognise a W2 domain in the interval 248–415; that stretch reads VQQSLGTRKE…QNAEEESESE (168 aa). Residues serine 412 and serine 414 each carry the phosphoserine modification.

The protein belongs to the BZW family. Interacts with EIF3E. Interacts with EIF2S2. Interacts with EIF3C.

It localises to the cytoplasm. Its function is as follows. Translation initiation regulator which represses non-AUG initiated translation and repeat-associated non-AUG (RAN) initiated translation by acting as a competitive inhibitor of eukaryotic translation initiation factor 5 (EIF5) function. Increases the accuracy of translation initiation by impeding EIF5-dependent translation from non-AUG codons by competing with it for interaction with EIF2S2 within the 43S pre-initiation complex (PIC) in an EIF3C-binding dependent manner. The protein is eIF5-mimic protein 1 (BZW2) of Homo sapiens (Human).